A 570-amino-acid polypeptide reads, in one-letter code: Transmembrane 7 superfamily member 3 (570 aa).

Positions 1-21 are cleaved as a signal peptide; it reads MGFLQLLVVAVLASEHRVAGA. 5 N-linked (GlcNAc...) asparagine glycosylation sites follow: Asn27, Asn61, Asn75, Asn87, and Asn264. The next 7 membrane-spanning stretches (helical) occupy residues 296–313, 320–342, 347–369, 371–393, 408–430, 437–459, and 479–501; these read VFFT…FFGH, LFFI…LTPI, NLIL…WWRF, ILSI…VTFF, FWVT…LRIL, VIGS…SYIT, and PFQT…GITL.

In terms of tissue distribution, widely expressed. Highly expressed in kidney and pancreas.

Its subcellular location is the cell membrane. In terms of biological role, involved in the inhibition of cytokine-induced death of pancreatic beta cells. Involved in the promotion of insulin secretion from pancreatic beta cells. Is a downstream transcriptional target of p53/TP53, and acts as a pro-survival homeostatic factor that attenuates the development of cellular stress. Maintains protein homeostasis and promotes cell survival through attenuation of endoplasmic reticulum (ER) stress and the subsequent induction of unfolded protein response (UPR). The chain is Transmembrane 7 superfamily member 3 (TM7SF3) from Homo sapiens (Human).